A 297-amino-acid chain; its full sequence is Giardin subunit alpha-6 (297 aa).

Annexin repeat units lie at residues 3–72 (TTVQ…AYLW), 74–146 (KPGD…HWIL), 153–222 (FDID…AAHY), and 226–295 (HPAR…ILWR).

It belongs to the annexin family. Giardin subunit alpha subfamily.

The protein resides in the cytoplasm. It is found in the cytoskeleton. Functionally, giardins are involved in parasite attachment to the intestinal mucosa and in the cytoskeletal disassembly and reassembly that marks the transition from infectious trophozoite to transmissible cyst. They may interact with other cytoskeletal proteins such as microtubules in the microribbons or crossbridges, to maintain the integrity of the ventral disk. The sequence is that of Giardin subunit alpha-6 from Giardia intestinalis (Giardia lamblia).